We begin with the raw amino-acid sequence, 452 residues long: Phosphoglucosamine mutase (452 aa).

Residue Ser88 is the Phosphoserine intermediate of the active site. Residues Ser88, Asp234, Asp236, and Asp238 each coordinate Mg(2+). A Phosphoserine modification is found at Ser88.

This sequence belongs to the phosphohexose mutase family. Mg(2+) is required as a cofactor. In terms of processing, activated by phosphorylation.

The enzyme catalyses alpha-D-glucosamine 1-phosphate = D-glucosamine 6-phosphate. Catalyzes the conversion of glucosamine-6-phosphate to glucosamine-1-phosphate. The chain is Phosphoglucosamine mutase from Methanococcus aeolicus (strain ATCC BAA-1280 / DSM 17508 / OCM 812 / Nankai-3).